The chain runs to 158 residues: 6,7-dimethyl-8-ribityllumazine synthase (158 aa).

Residues F22, 57–59 (SYE), and 81–83 (TVI) each bind 5-amino-6-(D-ribitylamino)uracil. Residue H89 is the Proton donor of the active site. F114 provides a ligand contact to 5-amino-6-(D-ribitylamino)uracil. Position 128 (R128) interacts with (2S)-2-hydroxy-3-oxobutyl phosphate.

It belongs to the DMRL synthase family. Forms an icosahedral capsid composed of 60 subunits, arranged as a dodecamer of pentamers.

It carries out the reaction (2S)-2-hydroxy-3-oxobutyl phosphate + 5-amino-6-(D-ribitylamino)uracil = 6,7-dimethyl-8-(1-D-ribityl)lumazine + phosphate + 2 H2O + H(+). It functions in the pathway cofactor biosynthesis; riboflavin biosynthesis; riboflavin from 2-hydroxy-3-oxobutyl phosphate and 5-amino-6-(D-ribitylamino)uracil: step 1/2. Functionally, catalyzes the formation of 6,7-dimethyl-8-ribityllumazine by condensation of 5-amino-6-(D-ribitylamino)uracil with 3,4-dihydroxy-2-butanone 4-phosphate. This is the penultimate step in the biosynthesis of riboflavin. The polypeptide is 6,7-dimethyl-8-ribityllumazine synthase (Blochmanniella pennsylvanica (strain BPEN)).